The chain runs to 307 residues: 2-dehydropantoate 2-reductase (307 aa).

NADP(+)-binding positions include 7 to 12 (GSGAMG), N102, and A128. N102 lines the substrate pocket. Catalysis depends on K184, which acts as the Proton donor. N188, N192, and S255 together coordinate substrate. E268 is an NADP(+) binding site.

This sequence belongs to the ketopantoate reductase family.

The protein resides in the cytoplasm. It carries out the reaction (R)-pantoate + NADP(+) = 2-dehydropantoate + NADPH + H(+). It participates in cofactor biosynthesis; (R)-pantothenate biosynthesis; (R)-pantoate from 3-methyl-2-oxobutanoate: step 2/2. Its function is as follows. Catalyzes the NADPH-dependent reduction of ketopantoate into pantoic acid. This Streptococcus pyogenes serotype M6 (strain ATCC BAA-946 / MGAS10394) protein is 2-dehydropantoate 2-reductase (apbA).